Reading from the N-terminus, the 179-residue chain is MKKDLTNIYLIGLMGAGKTSVGSQLAKLTKRILYDSDKEIEKRTGADIAWIFEMEGEAGFRRREREMIEALCKLDNIILATGGGVVLDEKNRQQISETGVVIYLTASIDTQLKRIGQKGEMRRPLFIKNNSKEKLQQLNEIRKPLYQAMADLVYPTDDLNPRQLATQILVDIKQTYSDL.

15–20 provides a ligand contact to ATP; it reads GAGKTS. Thr19 contacts Mg(2+). Substrate is bound by residues Asp37, Arg61, and Gly83. Arg122 is an ATP binding site. Position 142 (Arg142) interacts with substrate.

The protein belongs to the shikimate kinase family. Monomer. Mg(2+) is required as a cofactor.

The protein localises to the cytoplasm. The catalysed reaction is shikimate + ATP = 3-phosphoshikimate + ADP + H(+). It functions in the pathway metabolic intermediate biosynthesis; chorismate biosynthesis; chorismate from D-erythrose 4-phosphate and phosphoenolpyruvate: step 5/7. Its function is as follows. Catalyzes the specific phosphorylation of the 3-hydroxyl group of shikimic acid using ATP as a cosubstrate. This chain is Shikimate kinase, found in Coxiella burnetii (strain RSA 331 / Henzerling II).